The primary structure comprises 182 residues: Ribosome-recycling factor (182 aa).

Belongs to the RRF family.

The protein localises to the cytoplasm. In terms of biological role, responsible for the release of ribosomes from messenger RNA at the termination of protein biosynthesis. May increase the efficiency of translation by recycling ribosomes from one round of translation to another. The sequence is that of Ribosome-recycling factor from Synechocystis sp. (strain ATCC 27184 / PCC 6803 / Kazusa).